Consider the following 623-residue polypeptide: MLVLCSRSRLTSSLIRRLKDQIANVSNHRSFATSEGHRLAIVNKRSLDILQDPWFNKGTAFSMTERDRLDLRGLLPPNVMTTEQQIERFTADLRVLELTTKDGPSDTYDLAKWRILNRLHDRNETMFFKVLIENIEEYAPIVSTPTVGLVCQKFSGLYRRPRGMYFSSDDRGEMMSMVYNWPAEQVDMIVVTDGSRILGLGDLGVHGIGVAIGKLDLYVAAAGINPQRVLPVMIDVGTNNEDLLKNPLYLGLQKKRLDGEEYLAVMDEFMEAVFTRWPNVIVQFEDIQNKWALTLLQRYRHKYRTFNVDVQGTSGVAIAGLLGAVRAQGRPMIDFPKQKIVVAGAGSSGVGVLNAARKTMARMLGNDESAFDRARSQFWVVDDKGLITEKRANLDPEVQPFAWKENEISLQGLNEGAKLVEVVRQVKPDVLLGLSAYGGLFSKEVLEALKDSTSTRPAIFAMSNPTKNAECTPEEAFSIVGDHVVYASGSPFKDVDLGNGKIGHVNQGNNMYLFPGIGLGVLLSGSRIISDSMFQAAAERLAGYMTDEEVINGVIYPSISRIRDITKEVAAAVIKEAVEEDLAEGYRDMDARELQKLNEEQILEYIEKNMWNPEYPTLVYKKR.

Residues 1–31 (MLVLCSRSRLTSSLIRRLKDQIANVSNHRSF) constitute a mitochondrion transit peptide. 2 residues coordinate fumarate: R88 and R122. The Proton donor role is filled by S143. R196 is a binding site for (S)-malate. Position 196 (R196) interacts with NAD(+). K214 acts as the Proton acceptor in catalysis. 2 residues coordinate a divalent metal cation: E285 and D286. NAD(+) is bound at residue N289. D309 serves as a coordination point for a divalent metal cation. NAD(+) is bound at residue A345. The (S)-malate site is built by N464 and N509.

Belongs to the malic enzymes family. As to quaternary structure, heterodimer of two related subunits. Requires Mg(2+) as cofactor. The cofactor is Mn(2+).

It localises to the mitochondrion matrix. The catalysed reaction is (S)-malate + NAD(+) = pyruvate + CO2 + NADH. The protein operates within photosynthesis; C4 acid pathway. In Amaranthus hypochondriacus (Prince-of-Wales feather), this protein is NAD-dependent malic enzyme, mitochondrial.